The sequence spans 513 residues: Bone morphogenetic protein 6 (513 aa).

Positions 1–20 are cleaved as a signal peptide; that stretch reads MPGLGRRAQWLCWWWGLLCS. A propeptide spanning residues 21 to 374 is cleaved from the precursor; sequence CCGPPPLRPP…VSEVHVRTTR (354 aa). 3 disordered regions span residues 38-66, 89-131, and 145-200; these read AAGGQLLGDGGSPGRTEQPPPSPQSSSGF, LPHR…RLKS, and ADND…ASPL. The span at 98–121 shows a compositional bias: low complexity; sequence GLQQPQPPALRQQEEQQQQQQLPR. Over residues 158–172 the composition is skewed to polar residues; the sequence is QQSWPHEAASSSQRR. Asn-241, Asn-269, Asn-386, Asn-404, and Asn-454 each carry an N-linked (GlcNAc...) asparagine glycan. The segment at 373-398 is disordered; the sequence is TRSASSRRRQQSRNRSTQSQDVARVS. Intrachain disulfides connect Cys-412–Cys-478, Cys-441–Cys-510, and Cys-445–Cys-512.

Belongs to the TGF-beta family. Interacts with SOSTDC1. Interacts (when glycosylated) with type I receptor ACVR1; the interaction may induce HAMP expression. Interacts with type II receptor ACVR2B. Interacts with Hemojuvelin/HJV. Interacts with ERFE; the interaction inhibits BMP-induced transcription of HAMP. Interacts with BMPR1A/ALK3. Forms heterodimers with BMP2 in vitro; the heterodimer then binds to its receptor BMPR1A /ALK3 and may induce HAMP expression. Post-translationally, glycosylated at Asn-454. Glycosylation is crucial for recognition by the activin receptor type I/ACVR1.

The protein resides in the secreted. Functionally, growth factor of the TGF-beta superfamily that plays essential roles in many developmental processes including cartilage and bone formation. Also plays an important role in the regulation of HAMP/hepcidin expression and iron metabolism by acting as a ligand for hemojuvelin/HJV. Also acts to promote expression of HAMP, potentially via the interaction with its receptor BMPR1A/ALK3. Initiates the canonical BMP signaling cascade by associating with type I receptor ACVR1 and type II receptor ACVR2B. In turn, ACVR1 propagates signal by phosphorylating SMAD1/5/8 that travel to the nucleus and act as activators and repressors of transcription of target. Can also signal through non-canonical pathway such as TAZ-Hippo signaling cascade to modulate VEGF signaling by regulating VEGFR2 expression. The chain is Bone morphogenetic protein 6 (BMP6) from Homo sapiens (Human).